A 417-amino-acid chain; its full sequence is Protein FAM181B (417 aa).

The disordered stretch occupies residues 104-147 (CSGLMGTAPPRPASPSAADAPAKRPPGAPTVATPAHCKAAPRRE).

The protein belongs to the FAM181 family.

This is Protein FAM181B (Fam181b) from Mus musculus (Mouse).